Reading from the N-terminus, the 201-residue chain is uncharacterized protein (201 aa).

The protein belongs to the methyltransferase superfamily.

This is an uncharacterized protein from Bacillus subtilis (strain 168).